We begin with the raw amino-acid sequence, 60 residues long: Metallothionein (60 aa).

The beta stretch occupies residues 1–28 (MDPCDCAKTGTCNCGTSCTCANCSCTKC). A divalent metal cation contacts are provided by Cys4, Cys6, Cys12, Cys14, Cys18, Cys20, Cys23, Cys25, Cys28, Cys32, Cys33, Cys35, Cys36, Cys40, Cys43, Cys47, Cys49, Cys54, Cys58, and Cys59. An alpha region spans residues 29–60 (KKSCCECCPSGCSKCASGCACKDKTCDTNCCQ).

It belongs to the metallothionein superfamily. Type 1 family.

Its function is as follows. Metallothioneins have a high content of cysteine residues that bind various heavy metals. The polypeptide is Metallothionein (mt) (Gadus morhua (Atlantic cod)).